Consider the following 121-residue polypeptide: Fluoride-specific ion channel FluC 3 (121 aa).

The next 4 helical transmembrane spans lie at 3–23 (VFLP…RYLL), 40–60 (FTIN…ALGG), 69–89 (VLAT…NEMV), and 101–121 (AAYL…GFLV). The Na(+) site is built by glycine 76 and serine 79.

It belongs to the fluoride channel Fluc/FEX (TC 1.A.43) family.

Its subcellular location is the cell membrane. The enzyme catalyses fluoride(in) = fluoride(out). With respect to regulation, na(+) is not transported, but it plays an essential structural role and its presence is essential for fluoride channel function. Functionally, fluoride-specific ion channel. Important for reducing fluoride concentration in the cell, thus reducing its toxicity. This chain is Fluoride-specific ion channel FluC 3, found in Bifidobacterium longum (strain NCC 2705).